Here is a 187-residue protein sequence, read N- to C-terminus: Peptidyl-tRNA hydrolase (187 aa).

Y18 contributes to the tRNA binding site. H23 functions as the Proton acceptor in the catalytic mechanism. TRNA-binding residues include F65, N67, and N113.

Belongs to the PTH family. Monomer.

It localises to the cytoplasm. It catalyses the reaction an N-acyl-L-alpha-aminoacyl-tRNA + H2O = an N-acyl-L-amino acid + a tRNA + H(+). Hydrolyzes ribosome-free peptidyl-tRNAs (with 1 or more amino acids incorporated), which drop off the ribosome during protein synthesis, or as a result of ribosome stalling. Functionally, catalyzes the release of premature peptidyl moieties from peptidyl-tRNA molecules trapped in stalled 50S ribosomal subunits, and thus maintains levels of free tRNAs and 50S ribosomes. This Coxiella burnetii (strain CbuG_Q212) (Coxiella burnetii (strain Q212)) protein is Peptidyl-tRNA hydrolase.